Here is a 182-residue protein sequence, read N- to C-terminus: uncharacterized protein (182 aa).

Its subcellular location is the mitochondrion. This is an uncharacterized protein from Schizosaccharomyces pombe (strain 972 / ATCC 24843) (Fission yeast).